Reading from the N-terminus, the 563-residue chain is Endogenous retroviral envelope protein HEMO (563 aa).

An N-terminal signal peptide occupies residues 1–26 (MGSLSNYALLQLTLTAFLTILVQPQH). Residues 27-488 (LLAPVFRTLS…IFAKVGDWFR (462 aa)) lie on the Extracellular side of the membrane. 2 N-linked (GlcNAc...) asparagine glycosylation sites follow: asparagine 122 and asparagine 192. Residues 489–509 (SWGYVLLIVLFCLFIFVLIYV) form a helical membrane-spanning segment. At 510–563 (RVFRKSRRSLNSQPLNLALSPQQSAQLLVSETSCQVSNRAMKGLTTHQYDTSLL) the chain is on the cytoplasmic side.

It belongs to the gamma type-C retroviral envelope protein family. In terms of processing, N-glycosylated. Post-translationally, cleaved by some metalloproteinase at 432-Gln-Arg-433 (mainly) or 433-Arg-Gln-434, leading to release the secreted form (Endogenous retroviral envelope protein HEMO, secreted form) in the extracellular medium. Expressed at high level in the placenta and stem cells (at protein level). Also expressed in the kidney but at a lower level. Endogenous retroviral envelope protein HEMO, secreted form: Present in the blood of pregnant women (at protein level).

Its subcellular location is the cell membrane. It localises to the secreted. Its function is as follows. Endogenous envelope proteins originate from retroviral envelope proteins, which mediate receptor recognition and membrane fusion during early infection. Endogenous envelope proteins may have kept, lost or modified their original function during evolution. This Homo sapiens (Human) protein is Endogenous retroviral envelope protein HEMO.